Consider the following 162-residue polypeptide: Phosphopantetheine adenylyltransferase (162 aa).

Residue serine 9 coordinates substrate. ATP-binding positions include 9-10 (SF) and histidine 17. Lysine 41, leucine 77, and lysine 91 together coordinate substrate. Residues 92-94 (GLR), glutamate 102, and 126-132 (YAFLSSS) contribute to the ATP site.

Belongs to the bacterial CoaD family. As to quaternary structure, homohexamer. Mg(2+) is required as a cofactor.

The protein resides in the cytoplasm. The enzyme catalyses (R)-4'-phosphopantetheine + ATP + H(+) = 3'-dephospho-CoA + diphosphate. It participates in cofactor biosynthesis; coenzyme A biosynthesis; CoA from (R)-pantothenate: step 4/5. Functionally, reversibly transfers an adenylyl group from ATP to 4'-phosphopantetheine, yielding dephospho-CoA (dPCoA) and pyrophosphate. The protein is Phosphopantetheine adenylyltransferase of Parafrankia sp. (strain EAN1pec).